The sequence spans 229 residues: Potassium/proton antiporter CemA (229 aa).

4 consecutive transmembrane segments (helical) span residues 6–26 (AFIP…ISLC), 107–127 (IFNF…SFWG), 152–172 (FLIL…GWEL), and 190–210 (LSGL…YWIF).

It belongs to the CemA family.

The protein resides in the plastid. Its subcellular location is the chloroplast inner membrane. The enzyme catalyses K(+)(in) + H(+)(out) = K(+)(out) + H(+)(in). Its function is as follows. Contributes to K(+)/H(+) antiport activity by supporting proton efflux to control proton extrusion and homeostasis in chloroplasts in a light-dependent manner to modulate photosynthesis. Prevents excessive induction of non-photochemical quenching (NPQ) under continuous-light conditions. Indirectly promotes efficient inorganic carbon uptake into chloroplasts. The polypeptide is Potassium/proton antiporter CemA (Aethionema cordifolium (Lebanon stonecress)).